The sequence spans 237 residues: Small ribosomal subunit protein uS17m (237 aa).

This sequence belongs to the universal ribosomal protein uS17 family. Component of the mitochondrial small ribosomal subunit (mt-SSU). Mature yeast 74S mitochondrial ribosomes consist of a small (37S) and a large (54S) subunit. The 37S small subunit contains a 15S ribosomal RNA (15S mt-rRNA) and 34 different proteins. The 54S large subunit contains a 21S rRNA (21S mt-rRNA) and 46 different proteins.

Its subcellular location is the mitochondrion. Functionally, component of the mitochondrial ribosome (mitoribosome), a dedicated translation machinery responsible for the synthesis of mitochondrial genome-encoded proteins, including at least some of the essential transmembrane subunits of the mitochondrial respiratory chain. The mitoribosomes are attached to the mitochondrial inner membrane and translation products are cotranslationally integrated into the membrane. uS17m may have a meiosis-specific role as it accumulates during the middle stage of sporulation. The protein is Small ribosomal subunit protein uS17m (MRPS17) of Saccharomyces cerevisiae (strain ATCC 204508 / S288c) (Baker's yeast).